Here is a 220-residue protein sequence, read N- to C-terminus: 7-cyano-7-deazaguanine synthase (220 aa).

10–20 lines the ATP pocket; the sequence is FSGGQDSTTCL. Zn(2+)-binding residues include C186, C195, C198, and C201.

It belongs to the QueC family. Homodimer. Requires Zn(2+) as cofactor.

It catalyses the reaction 7-carboxy-7-deazaguanine + NH4(+) + ATP = 7-cyano-7-deazaguanine + ADP + phosphate + H2O + H(+). It functions in the pathway purine metabolism; 7-cyano-7-deazaguanine biosynthesis. Its function is as follows. Catalyzes the ATP-dependent conversion of 7-carboxy-7-deazaguanine (CDG) to 7-cyano-7-deazaguanine (preQ(0)). The sequence is that of 7-cyano-7-deazaguanine synthase from Bacillus cereus (strain B4264).